The primary structure comprises 261 residues: 3-hydroxyacyl-CoA dehydrogenase type-2 (261 aa).

N-acetylalanine is present on Ala-2. NAD(+)-binding residues include Ser-20, Leu-22, and Asp-41. At Lys-53 the chain carries N6-acetyllysine; alternate. Lys-53 is subject to N6-succinyllysine; alternate. Positions 64 and 65 each coordinate NAD(+). Position 69 is an N6-acetyllysine (Lys-69). Cys-91 provides a ligand contact to NAD(+). N6-acetyllysine occurs at positions 99 and 105. Ser-155 is a binding site for substrate. Residues Tyr-168, Lys-172, Phe-201, and Thr-203 each contribute to the NAD(+) site. Residue Tyr-168 is the Proton acceptor of the active site. Position 212 is an N6-acetyllysine; alternate (Lys-212). The residue at position 212 (Lys-212) is an N6-succinyllysine; alternate.

The protein belongs to the short-chain dehydrogenases/reductases (SDR) family. In terms of assembly, homotetramer. Component of mitochondrial ribonuclease P, a complex composed of TRMT10C/MRPP1, HSD17B10/MRPP2 and PRORP/MRPP3. Interacts with TRMT10C/MRPP1; forming the MRPP1-MRPP2 subcomplex of the mitochondrial ribonuclease P complex.

It localises to the mitochondrion. The protein resides in the mitochondrion matrix. The protein localises to the mitochondrion nucleoid. It catalyses the reaction a (3S)-3-hydroxyacyl-CoA + NAD(+) = a 3-oxoacyl-CoA + NADH + H(+). The catalysed reaction is (2S,3S)-3-hydroxy-2-methylbutanoyl-CoA + NAD(+) = 2-methyl-3-oxobutanoyl-CoA + NADH + H(+). It carries out the reaction testosterone + NAD(+) = androst-4-ene-3,17-dione + NADH + H(+). The enzyme catalyses 5alpha-androstane-3alpha,17beta-diol + NAD(+) = 17beta-hydroxy-5alpha-androstan-3-one + NADH + H(+). It catalyses the reaction 17beta-estradiol + NAD(+) = estrone + NADH + H(+). The catalysed reaction is cholate + NAD(+) = 3alpha,12alpha-dihydroxy-7-oxo-5beta-cholanate + NADH + H(+). It carries out the reaction (3S)-3-hydroxybutanoyl-CoA + NAD(+) = acetoacetyl-CoA + NADH + H(+). The enzyme catalyses (3S)-hydroxyoctanoyl-CoA + NAD(+) = 3-oxooctanoyl-CoA + NADH + H(+). It catalyses the reaction (3S)-hydroxyhexadecanoyl-CoA + NAD(+) = 3-oxohexadecanoyl-CoA + NADH + H(+). The catalysed reaction is 17beta-hydroxy-5alpha-androstan-3-one + NAD(+) = 5alpha-androstan-3,17-dione + NADH + H(+). It carries out the reaction 5alpha-pregnan-20beta-ol-3-one + NAD(+) = 5alpha-pregnane-3,20-dione + NADH + H(+). The enzyme catalyses 3alpha-hydroxy-5alpha-pregnan-20-one + NAD(+) = 5alpha-pregnane-3,20-dione + NADH + H(+). It catalyses the reaction cortisone + NAD(+) = 17alpha-hydroxypregn-4-en-3,11,20-trione-21-al + NADH + H(+). The catalysed reaction is 11-dehydrocorticosterone + NAD(+) = pregn-4-ene-3,11,20,21-tetraone + NADH + H(+). It carries out the reaction cortisol + NAD(+) = 11beta,17alpha-dihydroxypregn-4-ene-3,20,21-trione + NADH + H(+). The enzyme catalyses chenodeoxycholate + NAD(+) = 7-oxolithocholate + NADH + H(+). It catalyses the reaction ursodeoxycholate + NAD(+) = 7-oxolithocholate + NADH + H(+). The catalysed reaction is 3beta,7beta-dihydroxy-5beta-cholan-24-oate + NAD(+) = 3beta-hydroxy-7-oxo-5beta-cholan-24-oate + NADH + H(+). Its pathway is amino-acid degradation; L-isoleucine degradation. It participates in lipid metabolism; fatty acid beta-oxidation. The protein operates within steroid metabolism. It functions in the pathway lipid metabolism; bile acid biosynthesis. In terms of biological role, mitochondrial dehydrogenase involved in pathways of fatty acid, branched-chain amino acid and steroid metabolism. Acts as (S)-3-hydroxyacyl-CoA dehydrogenase in mitochondrial fatty acid beta-oxidation, a major degradation pathway of fatty acids. Catalyzes the third step in the beta-oxidation cycle, namely the reversible conversion of (S)-3-hydroxyacyl-CoA to 3-ketoacyl-CoA. Preferentially accepts straight medium- and short-chain acyl-CoA substrates with highest efficiency for (3S)-hydroxybutanoyl-CoA. Acts as 3-hydroxy-2-methylbutyryl-CoA dehydrogenase in branched-chain amino acid catabolic pathway. Catalyzes the oxidation of 3-hydroxy-2-methylbutanoyl-CoA into 2-methyl-3-oxobutanoyl-CoA, a step in isoleucine degradation pathway. Has hydroxysteroid dehydrogenase activity toward steroid hormones and bile acids. Catalyzes the oxidation of 3alpha-, 17beta-, 20beta- and 21-hydroxysteroids and 7alpha- and 7beta-hydroxy bile acids. Oxidizes allopregnanolone/brexanolone at the 3alpha-hydroxyl group, which is known to be critical for the activation of gamma-aminobutyric acid receptors (GABAARs) chloride channel. Has phospholipase C-like activity toward cardiolipin and its oxidized species. Likely oxidizes the 2'-hydroxyl in the head group of cardiolipin to form a ketone intermediate that undergoes nucleophilic attack by water and fragments into diacylglycerol, dihydroxyacetone and orthophosphate. Has higher affinity for cardiolipin with oxidized fatty acids and may degrade these species during the oxidative stress response to protect cells from apoptosis. By interacting with intracellular amyloid-beta, it may contribute to the neuronal dysfunction associated with Alzheimer disease (AD). Essential for structural and functional integrity of mitochondria. Its function is as follows. In addition to mitochondrial dehydrogenase activity, moonlights as a component of mitochondrial ribonuclease P, a complex that cleaves tRNA molecules in their 5'-ends. Together with TRMT10C/MRPP1, forms a subcomplex of the mitochondrial ribonuclease P, named MRPP1-MRPP2 subcomplex, which displays functions that are independent of the ribonuclease P activity. The MRPP1-MRPP2 subcomplex catalyzes the formation of N(1)-methylguanine and N(1)-methyladenine at position 9 (m1G9 and m1A9, respectively) in tRNAs; HSD17B10/MRPP2 acting as a non-catalytic subunit. The MRPP1-MRPP2 subcomplex also acts as a tRNA maturation platform: following 5'-end cleavage by the mitochondrial ribonuclease P complex, the MRPP1-MRPP2 subcomplex enhances the efficiency of 3'-processing catalyzed by ELAC2, retains the tRNA product after ELAC2 processing and presents the nascent tRNA to the mitochondrial CCA tRNA nucleotidyltransferase TRNT1 enzyme. Associates with mitochondrial DNA complexes at the nucleoids to initiate RNA processing and ribosome assembly. The polypeptide is 3-hydroxyacyl-CoA dehydrogenase type-2 (HSD17B10) (Bos taurus (Bovine)).